The sequence spans 73 residues: MGQASKVFGKQITYSVSPFQQKLFVNYFKNAIPHLRRGVKDNFFCSVPYFAALYITVNWANETYHNEMKDHWY.

The Mitochondrial matrix portion of the chain corresponds to 1-42; the sequence is MGQASKVFGKQITYSVSPFQQKLFVNYFKNAIPHLRRGVKDN. The chain crosses the membrane as a helical span at residues 43–60; that stretch reads FFCSVPYFAALYITVNWA. The Mitochondrial intermembrane portion of the chain corresponds to 61-73; the sequence is NETYHNEMKDHWY.

This sequence belongs to the UQCRQ/QCR8 family. As to quaternary structure, component of the ubiquinol-cytochrome c oxidoreductase (cytochrome b-c1 complex, complex III, CIII), a multisubunit enzyme composed of 3 respiratory subunits cytochrome b, cytochrome c1 and Rieske protein, 2 core protein subunits, and additional low-molecular weight protein subunits. The complex exists as an obligatory dimer and forms supercomplexes (SCs) in the inner mitochondrial membrane with cytochrome c oxidase (complex IV, CIV).

The protein localises to the mitochondrion inner membrane. Functionally, component of the ubiquinol-cytochrome c oxidoreductase, a multisubunit transmembrane complex that is part of the mitochondrial electron transport chain which drives oxidative phosphorylation. The respiratory chain contains 3 multisubunit complexes succinate dehydrogenase (complex II, CII), ubiquinol-cytochrome c oxidoreductase (cytochrome b-c1 complex, complex III, CIII) and cytochrome c oxidase (complex IV, CIV), that cooperate to transfer electrons derived from NADH and succinate to molecular oxygen, creating an electrochemical gradient over the inner membrane that drives transmembrane transport and the ATP synthase. The cytochrome b-c1 complex catalyzes electron transfer from ubiquinol to cytochrome c, linking this redox reaction to translocation of protons across the mitochondrial inner membrane, with protons being carried across the membrane as hydrogens on the quinol. In the process called Q cycle, 2 protons are consumed from the matrix, 4 protons are released into the intermembrane space and 2 electrons are passed to cytochrome c. This Dictyostelium discoideum (Social amoeba) protein is Probable cytochrome b-c1 complex subunit 8.